A 366-amino-acid chain; its full sequence is UDP-N-acetylglucosamine--N-acetylmuramyl-(pentapeptide) pyrophosphoryl-undecaprenol N-acetylglucosamine transferase (366 aa).

Residues 10-12, asparagine 124, arginine 165, serine 192, isoleucine 247, and glutamine 292 contribute to the UDP-N-acetyl-alpha-D-glucosamine site; that span reads TGG.

Belongs to the glycosyltransferase 28 family. MurG subfamily.

The protein resides in the cell inner membrane. The enzyme catalyses di-trans,octa-cis-undecaprenyl diphospho-N-acetyl-alpha-D-muramoyl-L-alanyl-D-glutamyl-meso-2,6-diaminopimeloyl-D-alanyl-D-alanine + UDP-N-acetyl-alpha-D-glucosamine = di-trans,octa-cis-undecaprenyl diphospho-[N-acetyl-alpha-D-glucosaminyl-(1-&gt;4)]-N-acetyl-alpha-D-muramoyl-L-alanyl-D-glutamyl-meso-2,6-diaminopimeloyl-D-alanyl-D-alanine + UDP + H(+). It functions in the pathway cell wall biogenesis; peptidoglycan biosynthesis. In terms of biological role, cell wall formation. Catalyzes the transfer of a GlcNAc subunit on undecaprenyl-pyrophosphoryl-MurNAc-pentapeptide (lipid intermediate I) to form undecaprenyl-pyrophosphoryl-MurNAc-(pentapeptide)GlcNAc (lipid intermediate II). The polypeptide is UDP-N-acetylglucosamine--N-acetylmuramyl-(pentapeptide) pyrophosphoryl-undecaprenol N-acetylglucosamine transferase (Geotalea daltonii (strain DSM 22248 / JCM 15807 / FRC-32) (Geobacter daltonii)).